The primary structure comprises 485 residues: Threonine synthase-like 2 (485 aa).

At Lys113 the chain carries N6-(pyridoxal phosphate)lysine.

This sequence belongs to the threonine synthase family. It depends on pyridoxal 5'-phosphate as a cofactor.

Functionally, acts as a catabolic phospho-lyase on both gamma- and beta-phosphorylated substrates. Degrades O-phospho-threonine (PThr) to alpha-ketobutyrate, ammonia and phosphate. This Rattus norvegicus (Rat) protein is Threonine synthase-like 2 (Thnsl2).